The chain runs to 322 residues: AB hydrolase superfamily protein FGSG_00044 (322 aa).

Positions 36–319 (RTTPKQPVAI…ITAEVRRIVK (284 aa)) constitute an AB hydrolase-1 domain.

This sequence belongs to the AB hydrolase superfamily.

The protein operates within mycotoxin biosynthesis. Functionally, AB hydrolase superfamily protein; part of the gene cluster that mediates the biosynthesis of gramillins A and B, bicyclic lipopeptides that induce cell death in maize leaves but not in wheat leaves. The nonribosomal peptide synthetase GRA1 incorporates respectively a glutamic adic (Glu), a leucine (Leu), a serine (Ser), a hydroxyglutamine (HOGln), a 2-amino decanoic acid, and 2 cysteins (CysB and CysA). The biosynthesis of 2-amino decanoic acid incorporated in gramillins could be initiated by a fatty acid synthase composed of the alpha and beta subunits FGSG_00036 and FGSG_11656. The cytochrome P450 monooxygenase FGSG_15680 could hydroxylate the fatty acid chain. Subsequent oxidation to the ketone by the oxidoreductase FGSG_00048 and transamination by aminotransferase FGSG_00049 could form 2-amino-decanoic acid. On the other hand, FGSG_15680 could also be responsible for the HO-modified glutamine at the gamma-position. Whether hydroxylation occurs on the fully assembled product or on the Gln residue prior to assembly into the gramillins requires further proof. The thioredoxin FGSG_00043 could also be required for the disulfide-bond formation between CysA and CysB. The specific involvement of the remaining proteins from the cluster is more difficult to discern, but could have broader regulatory (FGSG_00040 and FGSG_11657) or enzymatic functions (FGSG_00044 and FGSG_00045). The final C-domain of GRA1 does not possess the expected sequence of a termination CT domain, often implicated in macrocyclization and release of a cyclopeptidein fungal NRPs; and the thioesterase FGSG_00047 may act in concert with the terminal C-domain of GRA1 to catalyze the formation of the macrocyclic anhydride and release of the products. The polypeptide is AB hydrolase superfamily protein FGSG_00044 (Gibberella zeae (strain ATCC MYA-4620 / CBS 123657 / FGSC 9075 / NRRL 31084 / PH-1) (Wheat head blight fungus)).